A 135-amino-acid chain; its full sequence is MSHAEKPMSDSVNHHHHRTFEVLTAEPVRSRRKPRHWSDEEKAQLVAEALSPGANVSAIARSQGLDPSQLYAWRRKALSSGMVAPLTEGAPAPVKFTRFEAVGSSMVEIVVGDIVVRAGADVDPDHLAKILRVVR.

The disordered stretch occupies residues 1–36 (MSHAEKPMSDSVNHHHHRTFEVLTAEPVRSRRKPRH).

Belongs to the transposase 8 family.

This is an uncharacterized protein from Sinorhizobium fredii (strain NBRC 101917 / NGR234).